Here is a 413-residue protein sequence, read N- to C-terminus: Probable glucan 1,3-beta-glucosidase ARB_04467 (413 aa).

The signal sequence occupies residues Met-1 to Ala-17. Substrate-binding residues include Glu-46, Glu-202, and Tyr-262. The active-site Proton donor is Glu-202. Cys-282 and Cys-412 are joined by a disulfide. The active-site Nucleophile is Glu-300.

It belongs to the glycosyl hydrolase 5 (cellulase A) family. In terms of assembly, monomer.

It localises to the secreted. It is found in the cell wall. The enzyme catalyses Successive hydrolysis of beta-D-glucose units from the non-reducing ends of (1-&gt;3)-beta-D-glucans, releasing alpha-glucose.. Its function is as follows. Major glucan 1,3-beta-glucosidase required for cell wall integrity. Beta-glucanases participate in the metabolism of beta-glucan, the main structural component of the cell wall. Can also function biosynthetically as a transglycosylase. Functions to deliver glucan from the cell to the extracellular matrix. Involved in cell-substrate and cell-cell adhesion. The protein is Probable glucan 1,3-beta-glucosidase ARB_04467 of Arthroderma benhamiae (strain ATCC MYA-4681 / CBS 112371) (Trichophyton mentagrophytes).